The sequence spans 64 residues: Small ribosomal subunit protein bS21 (64 aa).

Positions 37 to 64 (EKPSVKRKRKEKEAQRRLRKKMRMMKKA) are disordered. Basic residues predominate over residues 53-64 (RLRKKMRMMKKA).

The protein belongs to the bacterial ribosomal protein bS21 family.

The chain is Small ribosomal subunit protein bS21 from Syntrophotalea carbinolica (strain DSM 2380 / NBRC 103641 / GraBd1) (Pelobacter carbinolicus).